We begin with the raw amino-acid sequence, 236 residues long: Purine nucleoside phosphorylase DeoD-type (236 aa).

H5 contributes to the a purine D-ribonucleoside binding site. Phosphate is bound by residues G21, R25, R44, and R88–S91. Residues E180 to E182 and S204 to D205 each bind a purine D-ribonucleoside. D205 (proton donor) is an active-site residue.

It belongs to the PNP/UDP phosphorylase family. In terms of assembly, homohexamer; trimer of homodimers.

It carries out the reaction a purine D-ribonucleoside + phosphate = a purine nucleobase + alpha-D-ribose 1-phosphate. The enzyme catalyses a purine 2'-deoxy-D-ribonucleoside + phosphate = a purine nucleobase + 2-deoxy-alpha-D-ribose 1-phosphate. Catalyzes the reversible phosphorolytic breakdown of the N-glycosidic bond in the beta-(deoxy)ribonucleoside molecules, with the formation of the corresponding free purine bases and pentose-1-phosphate. This chain is Purine nucleoside phosphorylase DeoD-type, found in Chromobacterium violaceum (strain ATCC 12472 / DSM 30191 / JCM 1249 / CCUG 213 / NBRC 12614 / NCIMB 9131 / NCTC 9757 / MK).